Reading from the N-terminus, the 236-residue chain is Leucyl/phenylalanyl-tRNA--protein transferase (236 aa).

Belongs to the L/F-transferase family.

It is found in the cytoplasm. It catalyses the reaction N-terminal L-lysyl-[protein] + L-leucyl-tRNA(Leu) = N-terminal L-leucyl-L-lysyl-[protein] + tRNA(Leu) + H(+). The enzyme catalyses N-terminal L-arginyl-[protein] + L-leucyl-tRNA(Leu) = N-terminal L-leucyl-L-arginyl-[protein] + tRNA(Leu) + H(+). The catalysed reaction is L-phenylalanyl-tRNA(Phe) + an N-terminal L-alpha-aminoacyl-[protein] = an N-terminal L-phenylalanyl-L-alpha-aminoacyl-[protein] + tRNA(Phe). Functions in the N-end rule pathway of protein degradation where it conjugates Leu, Phe and, less efficiently, Met from aminoacyl-tRNAs to the N-termini of proteins containing an N-terminal arginine or lysine. The chain is Leucyl/phenylalanyl-tRNA--protein transferase from Yersinia enterocolitica serotype O:8 / biotype 1B (strain NCTC 13174 / 8081).